The sequence spans 139 residues: Protein archease (139 aa).

Residues D12, D138, and I139 each coordinate Ca(2+).

This sequence belongs to the archease family.

Functionally, activates the tRNA-splicing ligase complex by facilitating the enzymatic turnover of catalytic subunit RtcB. Acts by promoting the guanylylation of RtcB, a key intermediate step in tRNA ligation. Can also alter the NTP specificity of RtcB such that ATP, dGTP or ITP is used efficiently. In Saccharolobus islandicus (strain Y.G.57.14 / Yellowstone #1) (Sulfolobus islandicus), this protein is Protein archease.